The primary structure comprises 240 residues: MORN repeat-containing protein 3 (240 aa).

Residues 6-35 (CPKKSESLWKGWDRKAQKNGLRRQVYAVNG) form an interaction with MDM2 region. MORN repeat units follow at residues 38–60 (YVGE…KNGA), 62–84 (YEGD…DQQT), 91–113 (YSGW…PKEY), 114–136 (YEGE…NGDI), 137–159 (YEGQ…NGNR), 160–182 (YEGC…DHGQ), and 184–205 (FEGF…GRDE). Residues 76–100 (TLSLPDQQTGKCRRVYSGWWKGDKK) are interaction with SIRT1. The tract at residues 206–240 (APEPTQFPIPEVKILDPDGVLAQALAMFKKTEEGD) is interaction with TP53.

As to quaternary structure, interacts with MEIG1. Interacts with TP53, MDM2 and SIRT1; the interactions mediate post-transcriptional modifications of TP53 by MDM2 and SIRT1.

The protein resides in the cytoplasmic vesicle. It is found in the secretory vesicle. It localises to the acrosome. In terms of biological role, assembles a suppression complex (suppresome) by tethering SIRT1 and MDM2 to regulate composite modifications of p53/TP53. Confers both deacetylation-mediated functional inactivation, by SIRT1, and ubiquitination-dependent degradation, by MDM2, of p53/TP53, promoting a proliferative and cell survival behaviors. May play a role in the regulation of spermatogenesis. This is MORN repeat-containing protein 3 (MORN3) from Macaca fascicularis (Crab-eating macaque).